The primary structure comprises 106 residues: Large ribosomal subunit protein uL24 (106 aa).

Belongs to the universal ribosomal protein uL24 family. Part of the 50S ribosomal subunit.

In terms of biological role, one of two assembly initiator proteins, it binds directly to the 5'-end of the 23S rRNA, where it nucleates assembly of the 50S subunit. Functionally, one of the proteins that surrounds the polypeptide exit tunnel on the outside of the subunit. The protein is Large ribosomal subunit protein uL24 of Marinobacter nauticus (strain ATCC 700491 / DSM 11845 / VT8) (Marinobacter aquaeolei).